Reading from the N-terminus, the 334-residue chain is MLLIGVAGTELSAQERDWLQHDAVAGVVLFKRNFASRTQVAELSAAIRAAAPRPVLVCVDQEGGRVQRFREGFSALAPLQSFGAQYAHDPESALAAARAHAQLMASEVRASGVDLSFAPVVDLGRGNRAIGDRAFSDDPQIVATFTRAYVQALHGAGMAATLKHFPGHGTVLEDTHVDHASDPRPLEVLQAEDLVPFVAGIEAGADAVMMAHVVYPQVAPEPAGYSQRWIEQILRGQMGFCGVVFSDDIGMAASFSAGGVAGRVHAHLDAGCDVVLVCHPELVAESLQAVQGRSLNTAALIGLIGRGALGWDGLLAGTDASFTTPPSAHFGTTA.

Residues D60, R68, R133, and 163–164 each bind substrate; that span reads KH. Residue H176 is the Proton donor/acceptor of the active site. D247 serves as the catalytic Nucleophile.

Belongs to the glycosyl hydrolase 3 family. NagZ subfamily.

Its subcellular location is the cytoplasm. The catalysed reaction is Hydrolysis of terminal non-reducing N-acetyl-D-hexosamine residues in N-acetyl-beta-D-hexosaminides.. Its pathway is cell wall biogenesis; peptidoglycan recycling. Functionally, plays a role in peptidoglycan recycling by cleaving the terminal beta-1,4-linked N-acetylglucosamine (GlcNAc) from peptide-linked peptidoglycan fragments, giving rise to free GlcNAc, anhydro-N-acetylmuramic acid and anhydro-N-acetylmuramic acid-linked peptides. The chain is Beta-hexosaminidase from Xanthomonas euvesicatoria pv. vesicatoria (strain 85-10) (Xanthomonas campestris pv. vesicatoria).